The following is a 327-amino-acid chain: Methionine import ATP-binding protein MetN (327 aa).

Positions 3-239 constitute an ABC transporter domain; sequence VELKNIEKIY…PKHAVTKELL (237 aa). 36 to 43 serves as a coordination point for ATP; sequence GYSGAGKS.

Belongs to the ABC transporter superfamily. Methionine importer (TC 3.A.1.24) family. As to quaternary structure, the complex is composed of two ATP-binding proteins (MetN), two transmembrane proteins (MetI) and a solute-binding protein (MetQ).

The protein resides in the cell inner membrane. It carries out the reaction L-methionine(out) + ATP + H2O = L-methionine(in) + ADP + phosphate + H(+). It catalyses the reaction D-methionine(out) + ATP + H2O = D-methionine(in) + ADP + phosphate + H(+). Functionally, part of the ABC transporter complex MetNIQ involved in methionine import. Responsible for energy coupling to the transport system. This chain is Methionine import ATP-binding protein MetN, found in Helicobacter pylori (strain HPAG1).